The chain runs to 921 residues: Dual serine/threonine and tyrosine protein kinase (921 aa).

The region spanning 645–899 (PKLGRELGRG…PLLGIVEPSL (255 aa)) is the Protein kinase domain. Residues 651-659 (LGRGQYGVV) and Lys674 contribute to the ATP site. Asp770 functions as the Proton acceptor in the catalytic mechanism.

It belongs to the protein kinase superfamily. Ser/Thr protein kinase family.

The protein localises to the cytoplasm. It localises to the cell membrane. It is found in the apical cell membrane. Its subcellular location is the basolateral cell membrane. The protein resides in the cell junction. It carries out the reaction L-seryl-[protein] + ATP = O-phospho-L-seryl-[protein] + ADP + H(+). The enzyme catalyses L-threonyl-[protein] + ATP = O-phospho-L-threonyl-[protein] + ADP + H(+). It catalyses the reaction L-tyrosyl-[protein] + ATP = O-phospho-L-tyrosyl-[protein] + ADP + H(+). May act as a positive regulator of ERK phosphorylation downstream of fibroblast growth factor-receptor activation. May induce both caspase-dependent apoptosis and caspase-independent cell death. May play a role in the embryonic development. The polypeptide is Dual serine/threonine and tyrosine protein kinase (dstyk) (Takifugu rubripes (Japanese pufferfish)).